We begin with the raw amino-acid sequence, 385 residues long: Fe-S cluster assembly protein DRE2 (385 aa).

The N-terminal SAM-like domain stretch occupies residues 1–177 (MTSSINILLL…KKLNKNDMTI (177 aa)). The tract at residues 178 to 240 (NVPQEIDNIT…NDLLKYNNHN (63 aa)) is linker. Positions 200-226 (YFSSDDENSSDGSLSDNANEEEEDDDE) are disordered. The segment covering 217–226 (ANEEEEDDDE) has biased composition (acidic residues). The [2Fe-2S] cluster site is built by cysteine 261, cysteine 275, cysteine 278, and cysteine 280. The tract at residues 261 to 280 (CELSLNGGKKRKKACKDCTC) is fe-S binding site A. [4Fe-4S] cluster is bound by residues cysteine 348, cysteine 351, cysteine 359, and cysteine 362. 2 short sequence motifs (cx2C motif) span residues 348–351 (CGSC) and 359–362 (CDGC). Residues 348–362 (CGSCALGDAFRCDGC) are fe-S binding site B.

The protein belongs to the anamorsin family. In terms of assembly, monomer. Interacts with TAH18. Interacts with MIA40. It depends on [2Fe-2S] cluster as a cofactor. The cofactor is [4Fe-4S] cluster.

The protein resides in the cytoplasm. The protein localises to the mitochondrion intermembrane space. Its function is as follows. Component of the cytosolic iron-sulfur (Fe-S) protein assembly (CIA) machinery required for the maturation of extramitochondrial Fe-S proteins. Part of an electron transfer chain functioning in an early step of cytosolic Fe-S biogenesis, facilitating the de novo assembly of a [4Fe-4S] cluster on the scaffold complex CFD1-NBP35. Electrons are transferred to DRE2 from NADPH via the FAD- and FMN-containing protein TAH18. TAH18-DRE2 are also required for the assembly of the diferric tyrosyl radical cofactor of ribonucleotide reductase (RNR), probably by providing electrons for reduction during radical cofactor maturation in the catalytic small subunit RNR2. In Candida dubliniensis (strain CD36 / ATCC MYA-646 / CBS 7987 / NCPF 3949 / NRRL Y-17841) (Yeast), this protein is Fe-S cluster assembly protein DRE2.